A 324-amino-acid polypeptide reads, in one-letter code: tRNA N6-adenosine threonylcarbamoyltransferase (324 aa).

The Fe cation site is built by His-107, His-111, and Tyr-128. Substrate is bound by residues 128-132 (YVSGG), Asp-160, Gly-173, Glu-177, and Asn-256. Residue Asp-284 coordinates Fe cation.

The protein belongs to the KAE1 / TsaD family. In terms of assembly, monomer. Component of the KEOPS complex that consists of Kae1, Bud32, Cgi121 and Pcc1; the whole complex dimerizes. It depends on Fe(2+) as a cofactor.

It localises to the cytoplasm. It catalyses the reaction L-threonylcarbamoyladenylate + adenosine(37) in tRNA = N(6)-L-threonylcarbamoyladenosine(37) in tRNA + AMP + H(+). Its function is as follows. Required for the formation of a threonylcarbamoyl group on adenosine at position 37 (t(6)A37) in tRNAs that read codons beginning with adenine. Is a component of the KEOPS complex that is probably involved in the transfer of the threonylcarbamoyl moiety of threonylcarbamoyl-AMP (TC-AMP) to the N6 group of A37. Kae1 likely plays a direct catalytic role in this reaction, but requires other protein(s) of the complex to fulfill this activity. In Methanothrix thermoacetophila (strain DSM 6194 / JCM 14653 / NBRC 101360 / PT) (Methanosaeta thermophila), this protein is tRNA N6-adenosine threonylcarbamoyltransferase.